Consider the following 239-residue polypeptide: Ribosomal RNA small subunit methyltransferase G (239 aa).

S-adenosyl-L-methionine contacts are provided by residues glycine 77, phenylalanine 82, 128–129 (AE), and arginine 146. The disordered stretch occupies residues 215–239 (DKRSQTPKKYPRKPGTPNKSPLLEK).

This sequence belongs to the methyltransferase superfamily. RNA methyltransferase RsmG family.

It is found in the cytoplasm. Its function is as follows. Specifically methylates the N7 position of guanine in position 535 of 16S rRNA. This is Ribosomal RNA small subunit methyltransferase G from Staphylococcus saprophyticus subsp. saprophyticus (strain ATCC 15305 / DSM 20229 / NCIMB 8711 / NCTC 7292 / S-41).